The primary structure comprises 447 residues: M-phase inducer phosphatase 3 (447 aa).

Residue serine 2 is modified to N-acetylserine. Residues serine 20, serine 38, serine 56, serine 60, and serine 63 each carry the phosphoserine modification. Threonine 66 is modified (phosphothreonine; by CDK1). Polar residues predominate over residues methionine 81 to alanine 90. The segment at methionine 81 to threonine 109 is disordered. Phosphoserine is present on serine 128. Threonine 129 is modified (phosphothreonine). At serine 192 the chain carries Phosphoserine; by CDK1. Phosphoserine; by PLK3 is present on residues serine 213 and serine 220. Residues valine 294 to aspartate 401 enclose the Rhodanese domain. Cysteine 350 is an active-site residue. Serine 445 bears the Phosphoserine mark.

The protein belongs to the MPI phosphatase family. Interacts with MAPK14 and 14-3-3 proteins. When phosphorylated on Ser-128 and/or Thr-129, interacts with PLK1. Interacts with MARK3/C-TAK1. Phosphorylated by PLK4. Phosphorylated by PLK1, leading to activate the phosphatase activity. Phosphorylated by CHEK1 and MAPKAPK2. This phosphorylation creates a binding site for 14-3-3 protein and inhibits the phosphatase activity. Phosphorylation by PLK3 at Ser-213 promotes nuclear translocation. Ser-220 is a minor phosphorylation site. Phosphorylation by CDK1 occurs at G2 and G2-M transition and leads to increased activity. In terms of tissue distribution, spleen and thymus.

It localises to the nucleus. The catalysed reaction is O-phospho-L-tyrosyl-[protein] + H2O = L-tyrosyl-[protein] + phosphate. Functions as a dosage-dependent inducer in mitotic control. Tyrosine protein phosphatase required for progression of the cell cycle. When phosphorylated, highly effective in activating G2 cells into prophase. Directly dephosphorylates CDK1 and activates its kinase activity. The sequence is that of M-phase inducer phosphatase 3 (Cdc25c) from Mus musculus (Mouse).